Here is a 445-residue protein sequence, read N- to C-terminus: Exodeoxyribonuclease 7 large subunit (445 aa).

It belongs to the XseA family. In terms of assembly, heterooligomer composed of large and small subunits.

It localises to the cytoplasm. The enzyme catalyses Exonucleolytic cleavage in either 5'- to 3'- or 3'- to 5'-direction to yield nucleoside 5'-phosphates.. In terms of biological role, bidirectionally degrades single-stranded DNA into large acid-insoluble oligonucleotides, which are then degraded further into small acid-soluble oligonucleotides. The protein is Exodeoxyribonuclease 7 large subunit of Pasteurella multocida (strain Pm70).